We begin with the raw amino-acid sequence, 133 residues long: Fatty acid-binding protein, heart (133 aa).

At Val2 the chain carries N-acetylvaline. Thr8 carries the phosphothreonine modification. At Tyr20 the chain carries Phosphotyrosine; by Tyr-kinases. Ser23 is modified (phosphoserine). Residue Thr30 is modified to Phosphothreonine. Ser83 is modified (phosphoserine). (9Z)-octadecenoate is bound at residue 127–129 (RTY). Residue 127-129 (RTY) participates in hexadecanoate binding. Octadecanoate is bound at residue 127-129 (RTY).

It belongs to the calycin superfamily. Fatty-acid binding protein (FABP) family.

It is found in the cytoplasm. FABPs are thought to play a role in the intracellular transport of long-chain fatty acids and their acyl-CoA esters. The sequence is that of Fatty acid-binding protein, heart (FABP3) from Sus scrofa (Pig).